Consider the following 343-residue polypeptide: Phosphoribosylformylglycinamidine cyclo-ligase (343 aa).

Belongs to the AIR synthase family.

Its subcellular location is the cytoplasm. The catalysed reaction is 2-formamido-N(1)-(5-O-phospho-beta-D-ribosyl)acetamidine + ATP = 5-amino-1-(5-phospho-beta-D-ribosyl)imidazole + ADP + phosphate + H(+). The protein operates within purine metabolism; IMP biosynthesis via de novo pathway; 5-amino-1-(5-phospho-D-ribosyl)imidazole from N(2)-formyl-N(1)-(5-phospho-D-ribosyl)glycinamide: step 2/2. The polypeptide is Phosphoribosylformylglycinamidine cyclo-ligase (Carboxydothermus hydrogenoformans (strain ATCC BAA-161 / DSM 6008 / Z-2901)).